A 753-amino-acid chain; its full sequence is Striatin-4 (753 aa).

Residues 10 to 65 form a disordered region; the sequence is VAAAASSCRPLGSGAGPGPTGAAPVSAPAPGPGPAGKGGGGGGSPGPTAGPEPLSL. Residues 43–54 show a composition bias toward gly residues; sequence PAGKGGGGGGSP. At S53 the chain carries Phosphoserine. Positions 69-136 form a coiled coil; sequence LHFIQHEWAR…QERAKYHKLK (68 aa). A caveolin-binding region spans residues 71 to 79; that stretch reads FIQHEWARF. The tract at residues 165-182 is calmodulin-binding; the sequence is ENSPLVWKEGRQLLRQYL. Position 206 is a phosphoserine (S206). Disordered stretches follow at residues 213–232, 271–345, and 363–382; these read VEPS…LSGG, CEDE…SPHE, and VDGL…QPRP. Acidic residues-rich tracts occupy residues 271 to 283 and 302 to 317; these read CEDE…DELD and EMED…DAIN. A Phosphoserine modification is found at S276. Basic and acidic residues predominate over residues 332-345; the sequence is PDPRRCTVDGSPHE. Over residues 370–380 the composition is skewed to pro residues; the sequence is VTGPPPGTPQP. WD repeat units follow at residues 436–475, 489–528, 542–581, 587–628, 635–674, 677–716, and 723–753; these read SHYD…TAKK, AHRG…MDPY, GHGD…PACL, ASEH…ALLT, SGPT…PVHS, AHLD…CVQE, and KHEE…KVFV.

This sequence belongs to the WD repeat striatin family. Part of the core of STRIPAK complexes composed of PP2A catalytic and scaffolding subunits, the striatins (PP2A regulatory subunits), the striatin-associated proteins MOB4, STRIP1 and STRIP2, PDCD10 and members of the STE20 kinases, such as STK24 and STK26. Interacts with CTTNBP2NL.

The protein localises to the cytoplasm. In terms of biological role, calmodulin-binding scaffolding protein which is the center of the striatin-interacting phosphatase and kinase (STRIPAK) complexes. STRIPAK complexes have critical roles in protein (de)phosphorylation and are regulators of multiple signaling pathways including Hippo, MAPK, nuclear receptor and cytoskeleton remodeling. Different types of STRIPAK complexes are involved in a variety of biological processes such as cell growth, differentiation, apoptosis, metabolism and immune regulation. Key regulator of the expanded Hippo signaling pathway by interacting and allowing the inhibition of MAP4K kinases by the STRIPAK complex. The sequence is that of Striatin-4 from Homo sapiens (Human).